Consider the following 109-residue polypeptide: Flagellar hook-basal body complex protein FliE (109 aa).

The protein belongs to the FliE family.

It is found in the bacterial flagellum basal body. The chain is Flagellar hook-basal body complex protein FliE from Pseudomonas syringae pv. tomato (strain ATCC BAA-871 / DC3000).